Reading from the N-terminus, the 782-residue chain is MRRSLAPSQRGGQRLSSRNDFTPPLLKKNKRACQQDLEQERLRQSALRDATNTSDLPLPIRFTANTEYEMAIAKVLARKFKVPIDNYVPDYGGNRTLGVRRRIVRRPLHDPLACNALVLYHAPNYTDHERMSMEPSSVLVHVVVDPLLSNILRPHQREGVRFMYECVEGKRGNFNGCIMADEMGLGKTLQCVALVWTLLKQSAECKPTINKCIIVSPSSLVKNWEKEFTKWLHGRMHCLAMEGGSKENTVRALEQFSMNASTRLGTPVLLISYETFRIYAEILCKYEVGMVICDEGHRLKNSDNLTYQALMGLKTKRRVLLSGTPIQNDLTEYFSLVNFVNPEMLGTAADFKRNFENCILRGQNADSTDKERDRALEKTQELIKLVDQCIIRRTNQILTKYLPVKFEMVICAKLTPIQLQLYTNFLKSDQVRRSLADCKEKASLTALADITTLKKLCSHPNLICEKIAAEEKGFENSQNILPINYNPKGEINPELSGKFKLLDFMLAAIRAHGNDKVVLISNYTQTLDLFEQLARKRKYGFVRLDGTMSIKKRSKVVDRFNDPESDCFLFMLSSKAGGCGLNLIGANRLFMFDPDWNPANDEQAMARVWRDGQKKPCYIYRLVASGSIEEKILQRQTHKKSLSSTIIDNNESAEKHFTRDDLKDLFSFDPDILSDTHDKLKCKRCVQNVQMKPPPDDTDCTSHLSQWYHCSNNRGLPDNILAQAWTDSKCVSFVFHHRSQSQKIETTPATETSVEAKPEPERRKRPAMPLSDDSADEDFQGF.

Positions 1-20 (MRRSLAPSQRGGQRLSSRND) are enriched in polar residues. Positions 1–28 (MRRSLAPSQRGGQRLSSRNDFTPPLLKK) are disordered. The segment at 2-9 (RRSLAPSQ) is required for chromatin remodeling, strand pairing activities and coupling of ATPase activity. T22 carries the post-translational modification Phosphothreonine. One can recognise a Helicase ATP-binding domain in the interval 168-343 (EGKRGNFNGC…FSLVNFVNPE (176 aa)). 181 to 188 (DEMGLGKT) serves as a coordination point for ATP. Residues 294–297 (DEGH) carry the DEGH box motif. Positions 501–658 (LLDFMLAAIR…NNESAEKHFT (158 aa)) constitute a Helicase C-terminal domain. A compositionally biased stretch (polar residues) spans 741–753 (SQKIETTPATETS). Residues 741–782 (SQKIETTPATETSVEAKPEPERRKRPAMPLSDDSADEDFQGF) are disordered. Acidic residues predominate over residues 773 to 782 (DSADEDFQGF).

It belongs to the SNF2/RAD54 helicase family. In terms of assembly, interacts (via N-terminus) with spn-A/Rad51.

The protein localises to the nucleus. Involved in mitotic DNA repair and meiotic recombination. Functions in the recombinational DNA repair pathway. Essential for interhomolog gene conversion (GC), but may have a less important role in intersister GC than spn-A/Rad51. In the presence of DNA, spn-A/Rad51 enhances the ATPase activity of okr/Rad54. The protein is DNA repair and recombination protein RAD54-like of Drosophila pseudoobscura pseudoobscura (Fruit fly).